The sequence spans 374 residues: MAFHGHLPHEMTMQALGADDAAVAAAAAAGGVGAGGAPAWMRYNDGSFLHLQTTSDSSASPSGAAAAAAAAAAAAAAGVQQWMGGGGGGEDAVAAAMGGGGEADAARCKAEILAHPLYEQLLSAHVACLRIATPVDQLPRIDAQLAQSQGVVAKYSALAAAAAGDDGRELDQFMTHYVLLLCSFKEQLQQHVRVHAMEAVMACWELEQNLQSLTGASPGEGTGATMSDGEDDQADSEANMYDPSLDGADNMGFGLPTESERSLMERVRQELKHELKQGYKEKLIDIREEILRKRRAGKLPGDTTSTLKAWWQSHAKWPYPTEEDKARLVQETGLQLKQINNWFINQRKRNWHSNPSSSTSVKTKRKSNAGDNNS.

The interval 214–242 (TGASPGEGTGATMSDGEDDQADSEANMYD) is disordered. The ELK domain occupies 270–290 (ELKHELKQGYKEKLIDIREEI). Residues 291-354 (LRKRRAGKLP…NQRKRNWHSN (64 aa)) constitute a DNA-binding region (homeobox; TALE-type). Residues 347 to 374 (RKRNWHSNPSSSTSVKTKRKSNAGDNNS) are disordered.

This sequence belongs to the TALE/KNOX homeobox family. As to expression, isoforms 1 and 2 are expressed in roots, stems, shoot meristem, leaf blades, leaf sheaths and flowers. Isoform 3 is expressed in stems, shoot meristem, rachis, leaf blades and leaf sheaths.

The protein resides in the nucleus. Functionally, isoform 3 acts as a transcription activator, but isoforms 1 and 2 do not. The protein is Homeobox protein knotted-1-like 13 (OSH45) of Oryza sativa subsp. japonica (Rice).